Here is a 284-residue protein sequence, read N- to C-terminus: Asialoglycoprotein receptor 1 (284 aa).

Residues 1–18 (MTKDYQDFQHLDNDNDHH) show a composition bias toward basic and acidic residues. The segment at 1–25 (MTKDYQDFQHLDNDNDHHQLRRGPP) is disordered. Residues 1-39 (MTKDYQDFQHLDNDNDHHQLRRGPPPTPRLLQRLCSGSR) are Cytoplasmic-facing. Positions 5–8 (YQDF) match the Endocytosis signal motif. Cysteine 35 is lipidated: S-palmitoyl cysteine. The chain crosses the membrane as a helical; Signal-anchor for type II membrane protein span at residues 40–60 (LLLLSSSLSILLLVVVCVITS). The stretch at 59 to 117 (TSQNSQLREDLLALRQNFSNLTVSTEDQVKALSTQGSSVGRKMKLVESKLEKQQKDLTE) forms a coiled coil. The Extracellular segment spans residues 61 to 284 (QNSQLREDLL…VCETKLDKAN (224 aa)). 3 N-linked (GlcNAc...) asparagine glycosylation sites follow: asparagine 75, asparagine 78, and asparagine 146. Intrachain disulfides connect cysteine 153–cysteine 164, cysteine 181–cysteine 276, and cysteine 254–cysteine 268. Residues 160-277 (YEGSCYWFSS…CRRPYRWVCE (118 aa)) enclose the C-type lectin domain. Residues valine 190, glutamate 196, aspartate 215, glutamine 239, aspartate 241, glutamate 252, aspartate 253, asparagine 264, aspartate 265, and glutamate 277 each coordinate Ca(2+).

Interacts with LASS2. Phosphorylated on a cytoplasmic Ser residue. As to expression, expressed exclusively in hepatic parenchymal cells.

The protein localises to the membrane. In terms of biological role, mediates the endocytosis of plasma glycoproteins to which the terminal sialic acid residue on their complex carbohydrate moieties has been removed. The receptor recognizes terminal galactose and N-acetylgalactosamine units. After ligand binding to the receptor, the resulting complex is internalized and transported to a sorting organelle, where receptor and ligand are disassociated. The receptor then returns to the cell membrane surface. This Mus musculus (Mouse) protein is Asialoglycoprotein receptor 1 (Asgr1).